Consider the following 30-residue polypeptide: Trypsin inhibitor 3 (30 aa).

Gln1 carries the pyrrolidone carboxylic acid modification. Disulfide bonds link Cys4/Cys21, Cys11/Cys23, and Cys17/Cys29.

Its subcellular location is the secreted. Its function is as follows. Inhibits trypsin; probably participates in a plant defense mechanism. The chain is Trypsin inhibitor 3 from Momordica cochinchinensis (Spiny bitter cucumber).